The primary structure comprises 408 residues: Large ribosomal subunit protein uL4 (408 aa).

The segment at 58–98 is disordered; it reads PYAVSKKAGHQTSAESWGTGRAVSRIPRVPGGGTHRAGQGA.

It belongs to the universal ribosomal protein uL4 family.

The polypeptide is Large ribosomal subunit protein uL4 (RPL4) (Prunus armeniaca (Apricot)).